A 21-amino-acid polypeptide reads, in one-letter code: Mast cell protease 3 (21 aa).

A Peptidase S1 domain is found at 1–21 (IIGGVESRPHSRPYMATLEIT). Residues 1 to 21 (IIGGVESRPHSRPYMATLEIT) form a disordered region.

The protein belongs to the peptidase S1 family. Granzyme subfamily.

Its function is as follows. Thrombin inactivating protease. Displays chymotrypsin-like substrate specificity. This Mus musculus (Mouse) protein is Mast cell protease 3 (Mcpt3).